The primary structure comprises 454 residues: F-box protein At1g67130 (454 aa).

Residues 4 to 53 (GETLDSIPTDLILDILSRLPTKSIARFHCVSKLWSSMLASQDFTRLFVNR) enclose the F-box domain.

This Arabidopsis thaliana (Mouse-ear cress) protein is F-box protein At1g67130.